We begin with the raw amino-acid sequence, 273 residues long: Undecaprenyl-diphosphatase (273 aa).

8 consecutive transmembrane segments (helical) span residues 4–24 (IELL…WLPI), 45–65 (FMSM…VVLF), 84–104 (TFTL…MIPF), 112–132 (FFNP…FIII), 149–169 (ITYQ…IPGT), 187–207 (YVAA…ASLL), 219–239 (AEIV…IIVI), and 251–271 (FKVF…YFLL).

Belongs to the UppP family.

Its subcellular location is the cell membrane. It carries out the reaction di-trans,octa-cis-undecaprenyl diphosphate + H2O = di-trans,octa-cis-undecaprenyl phosphate + phosphate + H(+). Its function is as follows. Catalyzes the dephosphorylation of undecaprenyl diphosphate (UPP). Confers resistance to bacitracin. This is Undecaprenyl-diphosphatase from Lachnoclostridium phytofermentans (strain ATCC 700394 / DSM 18823 / ISDg) (Clostridium phytofermentans).